Consider the following 390-residue polypeptide: Phosphoglycerate kinase (390 aa).

Residues 21 to 23 (DLN), arginine 36, 59 to 62 (HLGR), arginine 114, and arginine 147 each bind substrate. ATP contacts are provided by residues lysine 198, glutamate 314, and 340-343 (GGDT).

It belongs to the phosphoglycerate kinase family. Monomer.

The protein resides in the cytoplasm. The catalysed reaction is (2R)-3-phosphoglycerate + ATP = (2R)-3-phospho-glyceroyl phosphate + ADP. The protein operates within carbohydrate degradation; glycolysis; pyruvate from D-glyceraldehyde 3-phosphate: step 2/5. This chain is Phosphoglycerate kinase (pgk), found in Buchnera aphidicola subsp. Acyrthosiphon pisum (strain APS) (Acyrthosiphon pisum symbiotic bacterium).